We begin with the raw amino-acid sequence, 432 residues long: D-amino acid dehydrogenase (432 aa).

3–17 serves as a coordination point for FAD; that stretch reads VLVLGSGVVGTASAY.

Belongs to the DadA oxidoreductase family. The cofactor is FAD.

The catalysed reaction is a D-alpha-amino acid + A + H2O = a 2-oxocarboxylate + AH2 + NH4(+). Its pathway is amino-acid degradation; D-alanine degradation; NH(3) and pyruvate from D-alanine: step 1/1. In terms of biological role, oxidative deamination of D-amino acids. The protein is D-amino acid dehydrogenase of Stutzerimonas stutzeri (strain A1501) (Pseudomonas stutzeri).